A 325-amino-acid polypeptide reads, in one-letter code: Ribonucleoside-diphosphate reductase small chain (325 aa).

D74, E105, and H108 together coordinate Fe cation. Residue Y112 is part of the active site. Fe cation is bound by residues E168, E202, and H205.

It belongs to the ribonucleoside diphosphate reductase small chain family. In terms of assembly, heterodimer of a large and a small chain. Fe cation is required as a cofactor.

The catalysed reaction is a 2'-deoxyribonucleoside 5'-diphosphate + [thioredoxin]-disulfide + H2O = a ribonucleoside 5'-diphosphate + [thioredoxin]-dithiol. Functionally, ribonucleoside-diphosphate reductase holoenzyme provides the precursors necessary for viral DNA synthesis. Allows virus growth in non-dividing cells. Catalyzes the biosynthesis of deoxyribonucleotides from the corresponding ribonucleotides. The polypeptide is Ribonucleoside-diphosphate reductase small chain (Yaba-like disease virus (YLDV)).